The following is a 351-amino-acid chain: Phospho-N-acetylmuramoyl-pentapeptide-transferase (351 aa).

Transmembrane regions (helical) follow at residues 17 to 37 (TAYA…FIIL), 63 to 83 (IPTM…FFWI), 85 to 105 (FWNI…CLGF), 124 to 144 (FKIY…YYFG), 158 to 178 (SLKL…LISA), 190 to 210 (GLAI…AYLA), 230 to 250 (LVVF…FNAY), 254 to 274 (IMMG…TALI), 279 to 299 (ILFA…IIQV), and 328 to 348 (QVVI…LSTL).

The protein belongs to the glycosyltransferase 4 family. MraY subfamily. Mg(2+) serves as cofactor.

The protein localises to the cell inner membrane. It catalyses the reaction UDP-N-acetyl-alpha-D-muramoyl-L-alanyl-gamma-D-glutamyl-meso-2,6-diaminopimeloyl-D-alanyl-D-alanine + di-trans,octa-cis-undecaprenyl phosphate = di-trans,octa-cis-undecaprenyl diphospho-N-acetyl-alpha-D-muramoyl-L-alanyl-D-glutamyl-meso-2,6-diaminopimeloyl-D-alanyl-D-alanine + UMP. It functions in the pathway cell wall biogenesis; peptidoglycan biosynthesis. Functionally, catalyzes the initial step of the lipid cycle reactions in the biosynthesis of the cell wall peptidoglycan: transfers peptidoglycan precursor phospho-MurNAc-pentapeptide from UDP-MurNAc-pentapeptide onto the lipid carrier undecaprenyl phosphate, yielding undecaprenyl-pyrophosphoryl-MurNAc-pentapeptide, known as lipid I. The polypeptide is Phospho-N-acetylmuramoyl-pentapeptide-transferase (Borrelia turicatae (strain 91E135)).